The primary structure comprises 182 residues: Putative manganese efflux pump MntP (182 aa).

A run of 6 helical transmembrane segments spans residues 6 to 26, 37 to 57, 71 to 91, 101 to 121, 131 to 151, and 162 to 182; these read LIPL…VSLG, ILYI…IGMV, HFAG…SSIL, IGIS…SVGL, VITI…GLFI, and YGEI…LFPI.

The protein belongs to the MntP (TC 9.B.29) family.

The protein resides in the cell membrane. Probably functions as a manganese efflux pump. In Bacillus cereus (strain Q1), this protein is Putative manganese efflux pump MntP.